The following is a 1206-amino-acid chain: Phosphoglucan, water dikinase, chloroplastic (1206 aa).

2 disordered regions span residues 1-20 (MTSL…PRRG) and 52-71 (RSAA…DSSK). A chloroplast-targeting transit peptide spans 1–56 (MTSLRPLETSLSIGGRPRRGLVLPPPGVGAGVLLRRGAMALPGRRGFACRGRSAAS). Residues 67–168 (RDSSKQPLVH…KFDIVCHWNR (102 aa)) enclose the CBM20 domain. Residue histidine 776 is the Tele-phosphohistidine intermediate of the active site.

This sequence belongs to the PEP-utilizing enzyme family. As to quaternary structure, homodimer. Requires Mg(2+) as cofactor.

The protein localises to the plastid. The protein resides in the chloroplast. The catalysed reaction is [(1-&gt;4)-6-phospho-alpha-D-glucosyl](n) + n ATP + n H2O = [(1-&gt;4)-3,6-bisphospho-alpha-D-glucosyl](n) + n AMP + n phosphate + 2n H(+). Mediates the incorporation of phosphate into starch-like phospho-alpha-glucan, mostly at the C-3 position of glucose units. May be required for starch degradation, suggesting that the phosphate content of starch regulates its degradability. This chain is Phosphoglucan, water dikinase, chloroplastic (GWD3), found in Oryza sativa subsp. japonica (Rice).